A 251-amino-acid polypeptide reads, in one-letter code: Prolactin-7B1 (251 aa).

The signal sequence occupies residues methionine 1–serine 29. 2 N-linked (GlcNAc...) asparagine glycosylation sites follow: asparagine 2 and asparagine 73. Cystine bridges form between cysteine 100-cysteine 216 and cysteine 233-cysteine 241.

It belongs to the somatotropin/prolactin family. In terms of tissue distribution, expression restricted to placenta. Abundantly expressed in trophoblast cells of the junctional zone and trophoblasts migrating into the mesometrial decidua.

Its subcellular location is the secreted. The chain is Prolactin-7B1 (Prl7b1) from Mus musculus (Mouse).